The sequence spans 447 residues: Phosphoglucosamine mutase (447 aa).

S102 (phosphoserine intermediate) is an active-site residue. Residues S102, D241, D243, and D245 each contribute to the Mg(2+) site. Phosphoserine is present on S102.

The protein belongs to the phosphohexose mutase family. Mg(2+) serves as cofactor. Activated by phosphorylation.

The catalysed reaction is alpha-D-glucosamine 1-phosphate = D-glucosamine 6-phosphate. In terms of biological role, catalyzes the conversion of glucosamine-6-phosphate to glucosamine-1-phosphate. This is Phosphoglucosamine mutase from Pseudomonas savastanoi pv. phaseolicola (strain 1448A / Race 6) (Pseudomonas syringae pv. phaseolicola (strain 1448A / Race 6)).